Here is an 800-residue protein sequence, read N- to C-terminus: Isoamylase 2, chloroplastic (800 aa).

The span at 1–10 (MASLPAPPTP) shows a compositional bias: pro residues. The interval 1–22 (MASLPAPPTPLGSCPRGRGGGR) is disordered. Residues 1–34 (MASLPAPPTPLGSCPRGRGGGRVVARPRRAGLAC) constitute a chloroplast transit peptide.

This sequence belongs to the glycosyl hydrolase 13 family. Forms a hetero-hexamer composed of five ISA1 and one ISA2. Highly expressed in developing endosperm and leaves.

It localises to the plastid. It is found in the chloroplast. It catalyses the reaction Hydrolysis of (1-&gt;6)-alpha-D-glucosidic branch linkages in glycogen, amylopectin and their beta-limit dextrins.. Its function is as follows. Starch-debranching enzyme involved in amylopectin biosynthesis in endosperm. Functions by removing excess branches or improper branches that interfere with the formation of double helices of the cluster chains of amylopectin and crystallization of starch. Works together with ISA1 as heterooligomer. The heterooligomer ISA1 and ISA2 possesses higher affinity than the ISA1 homooligomer for various branched polyglucans in vitro, but no marked differences exist in chain preferences for debranching of amylopectin and phytoglycogen between these forms. This Oryza sativa subsp. japonica (Rice) protein is Isoamylase 2, chloroplastic.